Reading from the N-terminus, the 342-residue chain is Cyclin-D3-1 (342 aa).

The segment covering 322–334 has biased composition (polar residues); that stretch reads VGSPATNYESSAS. The segment at 322 to 342 is disordered; sequence VGSPATNYESSASSKRRRICR.

The protein belongs to the cyclin family. Cyclin D subfamily.

This chain is Cyclin-D3-1 (CYCD3-1), found in Oryza sativa subsp. japonica (Rice).